We begin with the raw amino-acid sequence, 126 residues long: uncharacterized protein (126 aa).

Transmembrane regions (helical) follow at residues 21–43 (LIVW…RIFS) and 48–70 (SVTF…LLLL).

It localises to the membrane. This is an uncharacterized protein from Saccharomyces cerevisiae (strain ATCC 204508 / S288c) (Baker's yeast).